Consider the following 454-residue polypeptide: (Z)-3-hexen-1-ol acetyltransferase (454 aa).

Active-site proton acceptor residues include H174 and D389.

This sequence belongs to the plant acyltransferase family. As to expression, expressed in leaves and stems. Lower levels in flowers and barely detected in roots and siliques.

The enzyme catalyses (3Z)-hex-3-en-1-ol + acetyl-CoA = (3Z)-hex-3-en-1-yl acetate + CoA. With respect to regulation, inhibited by magnesium, calcium, cobalt, zinc and copper. Acyltransferase involved in the production of green leaf volatiles (GLVs). Uses acetyl-CoA as substrate, but not malonyl-CoA or benzoyl-CoA. Prefers primary, medium-chain-length, aliphatic alcohols. The sequence is that of (Z)-3-hexen-1-ol acetyltransferase (CHAT) from Arabidopsis thaliana (Mouse-ear cress).